We begin with the raw amino-acid sequence, 638 residues long: Factor of DNA methylation 3 (638 aa).

Positions F318–M497 form a coiled coil.

In terms of biological role, acts in association with FDM4 and FDM5 for RNA-directed DNA methylation (RdDM). The protein is Factor of DNA methylation 3 of Arabidopsis thaliana (Mouse-ear cress).